Here is a 142-residue protein sequence, read N- to C-terminus: Large ribosomal subunit protein uL16 (142 aa).

It belongs to the universal ribosomal protein uL16 family. In terms of assembly, part of the 50S ribosomal subunit.

Binds 23S rRNA and is also seen to make contacts with the A and possibly P site tRNAs. This Aquifex aeolicus (strain VF5) protein is Large ribosomal subunit protein uL16.